A 693-amino-acid chain; its full sequence is Translation initiation factor IF-2 (693 aa).

The tr-type G domain maps to 181–349 (PRPPVVTVMG…MILLVAEMNE (169 aa)). Positions 190–197 (GHVDHGKT) are G1. 190–197 (GHVDHGKT) provides a ligand contact to GTP. The tract at residues 215–219 (GITQS) is G2. The segment at 236–239 (DTPG) is G3. Residues 236 to 240 (DTPGH) and 290 to 293 (NKID) contribute to the GTP site. Residues 290–293 (NKID) are G4. Residues 327–329 (SAR) form a G5 region.

The protein belongs to the TRAFAC class translation factor GTPase superfamily. Classic translation factor GTPase family. IF-2 subfamily.

It is found in the cytoplasm. One of the essential components for the initiation of protein synthesis. Protects formylmethionyl-tRNA from spontaneous hydrolysis and promotes its binding to the 30S ribosomal subunits. Also involved in the hydrolysis of GTP during the formation of the 70S ribosomal complex. This is Translation initiation factor IF-2 from Thermotoga petrophila (strain ATCC BAA-488 / DSM 13995 / JCM 10881 / RKU-1).